Consider the following 232-residue polypeptide: Octanoyltransferase (232 aa).

The BPL/LPL catalytic domain occupies 43–231 (LPTSNYLLFV…HLTHLFEAEI (189 aa)). Substrate is bound by residues 88–95 (RGGDITYH), 160–162 (AMG), and 173–175 (GFA). Cysteine 191 (acyl-thioester intermediate) is an active-site residue.

The protein belongs to the LipB family.

It localises to the cytoplasm. The enzyme catalyses octanoyl-[ACP] + L-lysyl-[protein] = N(6)-octanoyl-L-lysyl-[protein] + holo-[ACP] + H(+). The protein operates within protein modification; protein lipoylation via endogenous pathway; protein N(6)-(lipoyl)lysine from octanoyl-[acyl-carrier-protein]: step 1/2. Functionally, catalyzes the transfer of endogenously produced octanoic acid from octanoyl-acyl-carrier-protein onto the lipoyl domains of lipoate-dependent enzymes. Lipoyl-ACP can also act as a substrate although octanoyl-ACP is likely to be the physiological substrate. This chain is Octanoyltransferase, found in Flavobacterium johnsoniae (strain ATCC 17061 / DSM 2064 / JCM 8514 / BCRC 14874 / CCUG 350202 / NBRC 14942 / NCIMB 11054 / UW101) (Cytophaga johnsonae).